Reading from the N-terminus, the 513-residue chain is ETS translocation variant 3 (513 aa).

The ETS DNA-binding region spans 35-116; it reads IQLWHFILEL…KGKRFTYKFN (82 aa). The tract at residues 138 to 202 is disordered; that stretch reads QSAPPVPTAS…DLEDGSASDW (65 aa). Residues Ser139, Ser159, and Ser315 each carry the phosphoserine modification. The segment at 333–513 is disordered; that stretch reads QMHPEEPSQF…ATTATAAADA (181 aa). Composition is skewed to basic and acidic residues over residues 357-366, 380-392, and 399-419; these read ERVESREEAV, IKVEPATEKDPDS, and GKEEQTQEVDSMRSRTIEEGK. Residue Lys381 forms a Glycyl lysine isopeptide (Lys-Gly) (interchain with G-Cter in SUMO2) linkage. At Lys388 the chain carries N6-acetyllysine; alternate. A Glycyl lysine isopeptide (Lys-Gly) (interchain with G-Cter in SUMO2); alternate cross-link involves residue Lys388. The span at 430–439 shows a compositional bias: polar residues; that stretch reads WPSVSISTPS. Residues 441–450 are compositionally biased toward acidic residues; that stretch reads EPLEGTEDSE. Composition is skewed to basic and acidic residues over residues 451–466 and 477–489; these read DRSVREPGVPEKKEDA and RWNDDPEARELNK. Residues 504-513 show a composition bias toward low complexity; sequence ATTATAAADA.

The protein belongs to the ETS family.

It is found in the nucleus. Functionally, transcriptional repressor that contribute to growth arrest during terminal macrophage differentiation by repressing target genes involved in Ras-dependent proliferation. Represses MMP1 promoter activity. The protein is ETS translocation variant 3 (Etv3) of Mus musculus (Mouse).